Here is a 107-residue protein sequence, read N- to C-terminus: MILKILAKKHVKDVLKLLNSKDMYFSELQKTLNLHPKILDSILSDLVNEGFVEKREGESPYKFGKVYYSITPRGKRALEILDLIETFDTLREGQDIVINYKIVNSTA.

This is an uncharacterized protein from Methanocaldococcus jannaschii (strain ATCC 43067 / DSM 2661 / JAL-1 / JCM 10045 / NBRC 100440) (Methanococcus jannaschii).